A 391-amino-acid polypeptide reads, in one-letter code: Formate-dependent phosphoribosylglycinamide formyltransferase (391 aa).

N(1)-(5-phospho-beta-D-ribosyl)glycinamide is bound by residues 20–21 (EL) and Glu-80. ATP contacts are provided by residues Arg-112, Lys-153, 158–163 (SSGKGQ), 193–196 (EGFI), and Glu-201. The region spanning 117 to 306 (RLAAEELGLT…EFALHVRAFT (190 aa)) is the ATP-grasp domain. Residues Glu-265 and Glu-277 each contribute to the Mg(2+) site. N(1)-(5-phospho-beta-D-ribosyl)glycinamide is bound by residues Asp-284, Lys-354, and 361–362 (RR).

This sequence belongs to the PurK/PurT family. As to quaternary structure, homodimer.

It carries out the reaction N(1)-(5-phospho-beta-D-ribosyl)glycinamide + formate + ATP = N(2)-formyl-N(1)-(5-phospho-beta-D-ribosyl)glycinamide + ADP + phosphate + H(+). It participates in purine metabolism; IMP biosynthesis via de novo pathway; N(2)-formyl-N(1)-(5-phospho-D-ribosyl)glycinamide from N(1)-(5-phospho-D-ribosyl)glycinamide (formate route): step 1/1. Involved in the de novo purine biosynthesis. Catalyzes the transfer of formate to 5-phospho-ribosyl-glycinamide (GAR), producing 5-phospho-ribosyl-N-formylglycinamide (FGAR). Formate is provided by PurU via hydrolysis of 10-formyl-tetrahydrofolate. The chain is Formate-dependent phosphoribosylglycinamide formyltransferase from Vibrio vulnificus (strain CMCP6).